The sequence spans 296 residues: Cobalamin trafficking protein CblD (296 aa).

The N-terminal 38 residues, 1 to 38 (MAHVLCNRARLVSYLPGFCSLVKRVINPRAFSTAGSSG), are a transit peptide targeting the mitochondrion. Lys-203 is subject to N6-acetyllysine.

Heterodimer with MMACHC. Forms a multiprotein complex with MMACHC, MTR and MTRR.

The protein localises to the cytoplasm. Its subcellular location is the mitochondrion. Functionally, involved in cobalamin metabolism and trafficking. Plays a role in regulating the biosynthesis and the proportion of two coenzymes, methylcob(III)alamin (MeCbl) and 5'-deoxyadenosylcobalamin (AdoCbl). Promotes oxidation of cob(II)alamin bound to MMACHC. The processing of cobalamin in the cytosol occurs in a multiprotein complex composed of at least MMACHC, MMADHC, MTRR (methionine synthase reductase) and MTR (methionine synthase) which may contribute to shuttle safely and efficiently cobalamin towards MTR in order to produce methionine. In Rattus norvegicus (Rat), this protein is Cobalamin trafficking protein CblD (Mmadhc).